A 313-amino-acid chain; its full sequence is Nodulation protein D 3 (313 aa).

The HTH lysR-type domain maps to 6-63 (LDLNLLVALDALMTKRSVTAAARSINLSQPAMSSAIARLRSYFQDELFRMQGRELITT). The H-T-H motif DNA-binding region spans 23–42 (VTAAARSINLSQPAMSSAIA).

The protein belongs to the LysR transcriptional regulatory family.

In terms of biological role, nodD regulates the expression of the nodABCFE genes which encode other nodulation proteins. NodD is also a negative regulator of its own expression. Binds flavonoids as inducers. The sequence is that of Nodulation protein D 3 (nodD3) from Rhizobium meliloti (strain 1021) (Ensifer meliloti).